Here is a 59-residue protein sequence, read N- to C-terminus: Protein ORF5a (59 aa).

Residues 13–33 (VIYDCIAILALGCAITCLLLI) traverse the membrane as a helical; Signal-anchor for type III membrane protein segment.

The protein localises to the membrane. This Equine arteritis virus (strain Bucyrus) (EAV) protein is Protein ORF5a (GP5).